The primary structure comprises 251 residues: uncharacterized protein (251 aa).

It to Anabaena PCC 7120 alr2406.

This is an uncharacterized protein from Synechocystis sp. (strain ATCC 27184 / PCC 6803 / Kazusa).